The chain runs to 333 residues: Foldase protein PrsA (333 aa).

Positions 1–21 (MKKRTIATGLVTLLSIVTLAA) are cleaved as a signal peptide. C22 carries the N-palmitoyl cysteine lipid modification. Residue C22 is the site of S-diacylglycerol cysteine attachment. Residues 144 to 237 (KPEVTAQVIQ…PVYYIVKITK (94 aa)) enclose the PpiC domain. A disordered region spans residues 296–333 (AASGSGSSGSTTTTTAASSAATTAADDQTTAAETTAAE).

It belongs to the PrsA family.

It localises to the cell membrane. It carries out the reaction [protein]-peptidylproline (omega=180) = [protein]-peptidylproline (omega=0). Functionally, plays a major role in protein secretion by helping the post-translocational extracellular folding of several secreted proteins. The protein is Foldase protein PrsA of Streptococcus mutans serotype c (strain ATCC 700610 / UA159).